Reading from the N-terminus, the 1423-residue chain is Autophagy-related protein 11 (1423 aa).

Coiled coils occupy residues 551–589 and 625–978; these read DDEL…QSQA and SEGT…ASEL. Disordered stretches follow at residues 583–660 and 1028–1048; these read LHRQ…SNRA and RAER…SLRK. Positions 585 to 602 are enriched in polar residues; the sequence is RQSQASRPGNLFQPQTNS. The segment covering 631 to 648 has biased composition (basic and acidic residues); the sequence is LLRRISELENELREEKQR. Composition is skewed to polar residues over residues 650–660 and 1034–1047; these read SRIQNDLSNRA and QNPN…TSLR. A coiled-coil region spans residues 1102-1130; that stretch reads HRIKEVEHKARKWQKEARSYRDRAHIAQK. A disordered region spans residues 1327–1423; it reads SLRAAAPETP…DYTYESPGKK (97 aa). A compositionally biased stretch (basic and acidic residues) spans 1383–1395; the sequence is KTAEPRRMLDRQE.

This sequence belongs to the ATG11 family. As to quaternary structure, homodimer and potential homooligomers. Interacts with ATG1 kinase and the ATG19 and ATG34 cargo protein transporters. Interacts with ATG9, ATG17 and ATG20.

The protein resides in the preautophagosomal structure membrane. Its subcellular location is the vacuole membrane. Involved in cytoplasm to vacuole transport (Cvt), pexophagy, mitophagy and nucleophagy. Recruits mitochondria for their selective degradation via autophagy (mitophagy) during starvation, through its interaction with ATG32. Works as scaffold proteins that recruit ATG proteins to the pre-autophagosome (PAS), the site of vesicle/autophagosome formation. Required for ATG9 anterograde transport from the mitochondria to the PAS. Also recruits the ATG19-prAPE1 complex to the PAS. Required for the Cvt vesicles completion. Plays a role in morphological differentiation and cephalosporin production. The protein is Autophagy-related protein 11 of Hapsidospora chrysogena (Acremonium chrysogenum).